We begin with the raw amino-acid sequence, 309 residues long: Syndecan-1 (309 aa).

Residues 1–22 (MRRAALWLWLCALALRLQPVLP) form the signal peptide. Over 23–253 (QIVTVNVPPE…GLLDRKEVLG (231 aa)) the chain is Extracellular. Disordered stretches follow at residues 28-57 (NVPP…DITL) and 145-185 (TTAQ…GGTS). The segment covering 32–42 (EDQDGSGDDSD) has biased composition (acidic residues). O-linked (Xyl...) (chondroitin sulfate) serine glycosylation occurs at Ser37. The N-linked (GlcNAc...) asparagine glycan is linked to Asn43. O-linked (Xyl...) (heparan sulfate) serine glycosylation is found at Ser45 and Ser47. Residues 173-183 (GQPDQQPPSGG) are compositionally biased toward low complexity. 2 O-linked (Xyl...) (chondroitin sulfate) serine glycosylation sites follow: Ser205 and Ser215. A helical membrane pass occupies residues 254 to 274 (GVIAGGLVGLIFAVCLVGFML). Over 275–309 (YRMKKKDEGSYSLEEPKQANGGAYQKPTKQEEFYA) the chain is Cytoplasmic. Positions 283–309 (GSYSLEEPKQANGGAYQKPTKQEEFYA) are disordered. Ser284 carries the post-translational modification Phosphoserine.

The protein belongs to the syndecan proteoglycan family. Interacts with CDCP1. Interacts (via C-terminus) with TIAM1 (via PDZ domain). Interacts with MDK. Post-translationally, shedding is enhanced by a number of factors such as heparanase, thrombin or EGF. Also by stress and wound healing. PMA-mediated shedding is inhibited by TIMP3.

It is found in the membrane. It localises to the secreted. Its subcellular location is the extracellular exosome. Functionally, cell surface proteoglycan that contains both heparan sulfate and chondroitin sulfate and that links the cytoskeleton to the interstitial matrix. Regulates exosome biogenesis in concert with SDCBP and PDCD6IP. Able to induce its own expression in dental mesenchymal cells and also in the neighboring dental epithelial cells via an MSX1-mediated pathway. This chain is Syndecan-1, found in Mesocricetus auratus (Golden hamster).